The chain runs to 293 residues: Single-pass membrane and coiled-coil domain-containing protein 2 (293 aa).

Positions 116 to 188 form a coiled coil; that stretch reads KNLLEFLLKD…SAKLRMYQME (73 aa). A helical transmembrane segment spans residues 234–254; that stretch reads IFIMFYVLTVTGLLCYILFFG.

The protein localises to the membrane. This chain is Single-pass membrane and coiled-coil domain-containing protein 2 (SMCO2), found in Macaca fascicularis (Crab-eating macaque).